Here is a 155-residue protein sequence, read N- to C-terminus: Small ribosomal subunit protein uS9 (155 aa).

The protein belongs to the universal ribosomal protein uS9 family.

This Allorhizobium ampelinum (strain ATCC BAA-846 / DSM 112012 / S4) (Agrobacterium vitis (strain S4)) protein is Small ribosomal subunit protein uS9.